A 214-amino-acid polypeptide reads, in one-letter code: Cytochrome b (214 aa).

4 helical membrane-spanning segments follow: residues 31–51, 75–96, 111–131, and 176–196; these read FGSM…FLAI, WIMQ…YIHI, WLSG…GYVL, and FFAL…IHIL. Positions 81 and 95 each coordinate heme b. The heme b site is built by His-180 and His-194. His-199 serves as a coordination point for a ubiquinone.

It belongs to the cytochrome b family. The cytochrome bc1 complex contains 3 respiratory subunits (MT-CYB, CYC1 and UQCRFS1), 2 core proteins (UQCRC1 and UQCRC2) and probably 6 low-molecular weight proteins. Requires heme b as cofactor.

The protein localises to the mitochondrion inner membrane. Its function is as follows. Component of the ubiquinol-cytochrome c reductase complex (complex III or cytochrome b-c1 complex) that is part of the mitochondrial respiratory chain. The b-c1 complex mediates electron transfer from ubiquinol to cytochrome c. Contributes to the generation of a proton gradient across the mitochondrial membrane that is then used for ATP synthesis. This chain is Cytochrome b (MT-CYB), found in Agkistrodon contortrix contortrix (Southern copperhead).